A 293-amino-acid chain; its full sequence is Phosphatidylserine decarboxylase proenzyme (293 aa).

Catalysis depends on charge relay system; for autoendoproteolytic cleavage activity residues Asp-88, His-144, and Ser-247. Ser-247 (schiff-base intermediate with substrate; via pyruvic acid; for decarboxylase activity) is an active-site residue. The residue at position 247 (Ser-247) is a Pyruvic acid (Ser); by autocatalysis.

It belongs to the phosphatidylserine decarboxylase family. PSD-B subfamily. Prokaryotic type I sub-subfamily. As to quaternary structure, heterodimer of a large membrane-associated beta subunit and a small pyruvoyl-containing alpha subunit. It depends on pyruvate as a cofactor. In terms of processing, is synthesized initially as an inactive proenzyme. Formation of the active enzyme involves a self-maturation process in which the active site pyruvoyl group is generated from an internal serine residue via an autocatalytic post-translational modification. Two non-identical subunits are generated from the proenzyme in this reaction, and the pyruvate is formed at the N-terminus of the alpha chain, which is derived from the carboxyl end of the proenzyme. The autoendoproteolytic cleavage occurs by a canonical serine protease mechanism, in which the side chain hydroxyl group of the serine supplies its oxygen atom to form the C-terminus of the beta chain, while the remainder of the serine residue undergoes an oxidative deamination to produce ammonia and the pyruvoyl prosthetic group on the alpha chain. During this reaction, the Ser that is part of the protease active site of the proenzyme becomes the pyruvoyl prosthetic group, which constitutes an essential element of the active site of the mature decarboxylase.

The protein resides in the cell membrane. The enzyme catalyses a 1,2-diacyl-sn-glycero-3-phospho-L-serine + H(+) = a 1,2-diacyl-sn-glycero-3-phosphoethanolamine + CO2. The protein operates within phospholipid metabolism; phosphatidylethanolamine biosynthesis; phosphatidylethanolamine from CDP-diacylglycerol: step 2/2. Functionally, catalyzes the formation of phosphatidylethanolamine (PtdEtn) from phosphatidylserine (PtdSer). The polypeptide is Phosphatidylserine decarboxylase proenzyme (Xylella fastidiosa (strain 9a5c)).